The primary structure comprises 325 residues: Tagatose 1,6-diphosphate aldolase (325 aa).

It belongs to the aldolase LacD family.

The catalysed reaction is D-tagatofuranose 1,6-bisphosphate = D-glyceraldehyde 3-phosphate + dihydroxyacetone phosphate. It participates in carbohydrate metabolism; D-tagatose 6-phosphate degradation; D-glyceraldehyde 3-phosphate and glycerone phosphate from D-tagatose 6-phosphate: step 2/2. The chain is Tagatose 1,6-diphosphate aldolase from Staphylococcus epidermidis (strain ATCC 12228 / FDA PCI 1200).